Here is a 228-residue protein sequence, read N- to C-terminus: Methyltransferase verB (228 aa).

The protein belongs to the methyltransferase superfamily.

Its pathway is secondary metabolite biosynthesis; terpenoid biosynthesis. The protein operates within mycotoxin biosynthesis. Functionally, methyltransferase; part of the gene cluster that mediates the biosynthesis of the neurotoxin verrucosidin, a methylated alpha-pyrone polyketide that inhibits oxidative phosphorylation in mitochondria and thereby causes neurological diseases. The carbon backbone of verrucosidin is synthesized by the HR-PKS verA, and further modified by the other verrucodidin cluster enzymes. This is Methyltransferase verB from Penicillium polonicum.